Here is a 423-residue protein sequence, read N- to C-terminus: 5-hydroxytryptamine receptor 1A (423 aa).

A disordered region spans residues Met-1 to Gly-20. The Extracellular segment spans residues Met-1 to Ile-38. Residues Gly-7–Glu-16 show a composition bias toward polar residues. 3 N-linked (GlcNAc...) asparagine glycosylation sites follow: Asn-10, Asn-11, and Asn-24. A helical transmembrane segment spans residues Thr-39–Ala-59. The Cytoplasmic portion of the chain corresponds to Ala-60–Tyr-73. The helical transmembrane segment at Leu-74–Val-98 threads the bilayer. Residues Leu-99–Val-107 lie on the Extracellular side of the membrane. The chain crosses the membrane as a helical span at residues Thr-108–Leu-132. Cys-109 and Cys-187 form a disulfide bridge. The serotonin site is built by Asp-116 and Cys-120. The short motif at Asp-133–Tyr-135 is the DRY motif; important for ligand-induced conformation changes element. The Cytoplasmic segment spans residues Asp-133–Arg-152. The helical transmembrane segment at Ala-153–Gly-174 threads the bilayer. The Extracellular portion of the chain corresponds to Trp-175–His-193. Residues Gly-194–Gly-216 form a helical membrane-spanning segment. Residues Arg-217 to Thr-346 lie on the Cytoplasmic side of the membrane. The tract at residues Arg-235–Thr-277 is disordered. Lys-345, Thr-346, and Gly-352 together coordinate 1D-myo-inositol 4-phosphate. A helical transmembrane segment spans residues Leu-347–Phe-370. Residues Cys-371 to Pro-378 are Extracellular-facing. A helical membrane pass occupies residues Thr-379–Phe-403. Residues Asn-396–Tyr-400 carry the NPxxY motif; important for ligand-induced conformation changes and signaling motif. Positions 403, 404, and 405 each coordinate 1D-myo-inositol 4-phosphate. The Cytoplasmic segment spans residues Asn-404 to Arg-423.

It belongs to the G-protein coupled receptor 1 family. 5-hydroxytryptamine receptor subfamily. HTR1A sub-subfamily. As to quaternary structure, heterodimer; heterodimerizes with GPER1. Interacts with YIF1B. Interacts with GPR39 and GALR1.

The protein localises to the cell membrane. It localises to the cell projection. Its subcellular location is the dendrite. With respect to regulation, G-protein coupled receptor activity is regulated by lipids: phosphatidylinositol 4-phosphate increases HTR1A-mediated activity. Its function is as follows. G-protein coupled receptor for 5-hydroxytryptamine (serotonin). Also functions as a receptor for various drugs and psychoactive substances. Ligand binding causes a conformation change that triggers signaling via guanine nucleotide-binding proteins (G proteins) and modulates the activity of downstream effectors, such as adenylate cyclase. HTR1A is coupled to G(i)/G(o) G alpha proteins and mediates inhibitory neurotransmission: signaling inhibits adenylate cyclase activity and activates a phosphatidylinositol-calcium second messenger system that regulates the release of Ca(2+) ions from intracellular stores. Beta-arrestin family members regulate signaling by mediating both receptor desensitization and resensitization processes. The protein is 5-hydroxytryptamine receptor 1A (HTR1A) of Vulpes vulpes (Red fox).